The sequence spans 317 residues: Protein-L-isoaspartate O-methyltransferase (317 aa).

Ser59 is a catalytic residue.

Belongs to the methyltransferase superfamily. L-isoaspartyl/D-aspartyl protein methyltransferase family. In terms of assembly, monomer.

The protein resides in the cytoplasm. The enzyme catalyses [protein]-L-isoaspartate + S-adenosyl-L-methionine = [protein]-L-isoaspartate alpha-methyl ester + S-adenosyl-L-homocysteine. Functionally, catalyzes the methyl esterification of L-isoaspartyl residues in peptides and proteins that result from spontaneous decomposition of normal L-aspartyl and L-asparaginyl residues. It plays a role in the repair and/or degradation of damaged proteins. In Thermotoga maritima (strain ATCC 43589 / DSM 3109 / JCM 10099 / NBRC 100826 / MSB8), this protein is Protein-L-isoaspartate O-methyltransferase (pcm).